The sequence spans 93 residues: Small ribosomal subunit protein uS15 (93 aa).

The protein belongs to the universal ribosomal protein uS15 family. In terms of assembly, part of the 30S ribosomal subunit. Forms a bridge to the 50S subunit in the 70S ribosome, contacting the 23S rRNA.

Functionally, one of the primary rRNA binding proteins, it binds directly to 16S rRNA where it helps nucleate assembly of the platform of the 30S subunit by binding and bridging several RNA helices of the 16S rRNA. Its function is as follows. Forms an intersubunit bridge (bridge B4) with the 23S rRNA of the 50S subunit in the ribosome. This Anaplasma phagocytophilum (strain HZ) protein is Small ribosomal subunit protein uS15.